We begin with the raw amino-acid sequence, 367 residues long: GDSL esterase/lipase At4g28780 (367 aa).

Positions 1 to 28 (MSTFLLTWIIMTVALSVTLFLMPQQTNA) are cleaved as a signal peptide. The active-site Nucleophile is the Ser38. Asn119 carries an N-linked (GlcNAc...) asparagine glycan. Catalysis depends on residues Asp328 and His331. Asn356 is a glycosylation site (N-linked (GlcNAc...) asparagine).

Belongs to the 'GDSL' lipolytic enzyme family.

The protein localises to the secreted. This Arabidopsis thaliana (Mouse-ear cress) protein is GDSL esterase/lipase At4g28780.